The primary structure comprises 80 residues: Translation initiation factor IF-1, chloroplastic (80 aa).

The S1-like domain maps to 1–72 (MKEHDLINME…TKGRILYRIR (72 aa)).

The protein belongs to the IF-1 family. Component of the 30S ribosomal translation pre-initiation complex which assembles on the 30S ribosome in the order IF-2 and IF-3, IF-1 and N-formylmethionyl-tRNA(fMet); mRNA recruitment can occur at any time during PIC assembly.

It localises to the plastid. The protein resides in the chloroplast. One of the essential components for the initiation of protein synthesis. Stabilizes the binding of IF-2 and IF-3 on the 30S subunit to which N-formylmethionyl-tRNA(fMet) subsequently binds. Helps modulate mRNA selection, yielding the 30S pre-initiation complex (PIC). Upon addition of the 50S ribosomal subunit IF-1, IF-2 and IF-3 are released leaving the mature 70S translation initiation complex. This is Translation initiation factor IF-1, chloroplastic from Psilotum nudum (Whisk fern).